Reading from the N-terminus, the 193-residue chain is NADH-quinone oxidoreductase subunit B (193 aa).

Residues Cys-72, Cys-73, Cys-137, and Cys-167 each contribute to the [4Fe-4S] cluster site.

This sequence belongs to the complex I 20 kDa subunit family. In terms of assembly, NDH-1 is composed of 14 different subunits. Subunits NuoB, C, D, E, F, and G constitute the peripheral sector of the complex. [4Fe-4S] cluster is required as a cofactor.

Its subcellular location is the cell inner membrane. It carries out the reaction a quinone + NADH + 5 H(+)(in) = a quinol + NAD(+) + 4 H(+)(out). NDH-1 shuttles electrons from NADH, via FMN and iron-sulfur (Fe-S) centers, to quinones in the respiratory chain. Couples the redox reaction to proton translocation (for every two electrons transferred, four hydrogen ions are translocated across the cytoplasmic membrane), and thus conserves the redox energy in a proton gradient. The sequence is that of NADH-quinone oxidoreductase subunit B from Brucella anthropi (strain ATCC 49188 / DSM 6882 / CCUG 24695 / JCM 21032 / LMG 3331 / NBRC 15819 / NCTC 12168 / Alc 37) (Ochrobactrum anthropi).